A 273-amino-acid polypeptide reads, in one-letter code: Diaminopimelate epimerase (273 aa).

Substrate-binding residues include N11 and N60. C69 serves as the catalytic Proton donor. Substrate-binding positions include 70 to 71 (GN), N181, and 199 to 200 (ER). C209 acts as the Proton acceptor in catalysis. 210-211 (GT) serves as a coordination point for substrate.

It belongs to the diaminopimelate epimerase family. As to quaternary structure, homodimer.

It is found in the cytoplasm. The catalysed reaction is (2S,6S)-2,6-diaminopimelate = meso-2,6-diaminopimelate. It functions in the pathway amino-acid biosynthesis; L-lysine biosynthesis via DAP pathway; DL-2,6-diaminopimelate from LL-2,6-diaminopimelate: step 1/1. Functionally, catalyzes the stereoinversion of LL-2,6-diaminopimelate (L,L-DAP) to meso-diaminopimelate (meso-DAP), a precursor of L-lysine and an essential component of the bacterial peptidoglycan. The protein is Diaminopimelate epimerase of Helicobacter pylori (strain HPAG1).